The primary structure comprises 261 residues: Zinc finger protein 664 (261 aa).

C2H2-type zinc fingers lie at residues Tyr3–His25, His31–His53, Tyr59–His81, Tyr87–His109, Tyr115–His137, Phe143–His165, Tyr171–His193, Tyr199–His221, and Phe227–His249. A Glycyl lysine isopeptide (Lys-Gly) (interchain with G-Cter in SUMO2) cross-link involves residue Lys257.

The protein belongs to the krueppel C2H2-type zinc-finger protein family.

It is found in the nucleus. In terms of biological role, may be involved in transcriptional regulation. The sequence is that of Zinc finger protein 664 (ZNF664) from Pongo abelii (Sumatran orangutan).